Here is a 267-residue protein sequence, read N- to C-terminus: Large ribosomal subunit protein bL9m (267 aa).

The transit peptide at methionine 1 to glycine 52 directs the protein to the mitochondrion.

It belongs to the bacterial ribosomal protein bL9 family. In terms of assembly, component of the mitochondrial ribosome large subunit (39S) which comprises a 16S rRNA and about 50 distinct proteins.

It is found in the mitochondrion. This is Large ribosomal subunit protein bL9m (MRPL9) from Papio anubis (Olive baboon).